The sequence spans 280 residues: Elongation factor Ts (280 aa).

An involved in Mg(2+) ion dislocation from EF-Tu region spans residues 82 to 85; it reads TDFV.

It belongs to the EF-Ts family.

It is found in the cytoplasm. Its function is as follows. Associates with the EF-Tu.GDP complex and induces the exchange of GDP to GTP. It remains bound to the aminoacyl-tRNA.EF-Tu.GTP complex up to the GTP hydrolysis stage on the ribosome. The protein is Elongation factor Ts of Baumannia cicadellinicola subsp. Homalodisca coagulata.